The primary structure comprises 114 residues: C-X-C motif chemokine 6 (114 aa).

Positions 1 to 37 (MSLPSSRAARVPGPSGSLCALLALLLLLTPPGPLASA) are cleaved as a signal peptide. 2 disulfides stabilise this stretch: cysteine 49–cysteine 75 and cysteine 51–cysteine 91.

The protein belongs to the intercrine alpha (chemokine CxC) family.

The protein localises to the secreted. Its function is as follows. Chemotactic for neutrophil granulocytes. Signals through binding and activation of its receptors (CXCR1 and CXCR2). In addition to its chemotactic and angiogenic properties, it has strong antibacterial activity against Gram-positive and Gram-negative bacteria (90-fold-higher when compared to CXCL5 and CXCL7). In Homo sapiens (Human), this protein is C-X-C motif chemokine 6 (CXCL6).